Reading from the N-terminus, the 359-residue chain is Aminoacyl tRNA synthase complex-interacting multifunctional protein 1 (359 aa).

The segment at 52–92 is required for fibroblast proliferation; that stretch reads AVLKRLEQKGAEADQIIEYLKQQVALLKEKAVLQATLREEK. The segment at 100–241 is interaction with HSP90B1; that stretch reads KLKKEIEELK…APRTVISGLV (142 aa). Residues 149-163 are required for endothelial cell death; sequence SVSTISCSIKEHSKG. The interval 156–196 is disordered; it reads SIKEHSKGGGEEKKVKEKTDKKGEKKEKKLQSAAPSADSKP. Basic and acidic residues predominate over residues 157–185; the sequence is IKEHSKGGGEEKKVKEKTDKKGEKKEKKL. The required for endothelial cell migration stretch occupies residues 163-239; the sequence is GGGEEKKVKE…EAAPRTVISG (77 aa). Residue Lys184 forms a Glycyl lysine isopeptide (Lys-Gly) (interchain with G-Cter in SUMO1) linkage. Ser187 is subject to Phosphoserine. One can recognise a tRNA-binding domain in the interval 198–299; that stretch reads DVSRLDLRIG…NGSVPGDRIT (102 aa). Position 316 is an N6-succinyllysine (Lys316).

In terms of assembly, homodimer. Part of the multisynthetase complex (MSC), a multisubunit complex that groups tRNA ligases for Arg (RARS1), Asp (DARS1), Gln (QARS1), Ile (IARS1), Leu (LARS1), Lys (KARS1), Met (MARS1) the bifunctional ligase for Glu and Pro (EPRS1) and the auxiliary subunits AIMP1/p43, AIMP2/p38 and EEF1E1/p18. Interacts (via N-terminus) with RARS1 (via N-terminus). Part of a complex composed of RARS1, QARS1 and AIMP1. Interacts (via C-terminus) with SMURF2. Interacts (via N-terminus) with HSP90B1/gp96 (via C-terminus). Interacts with PSMA7. Interacts with TARS3. In terms of processing, cleaved by caspase-7 in response to apoptosis to produce EMAP-II.

It is found in the nucleus. It localises to the cytoplasm. Its subcellular location is the cytosol. The protein localises to the secreted. The protein resides in the endoplasmic reticulum. It is found in the golgi apparatus. Non-catalytic component of the multisynthase complex. Stimulates the catalytic activity of cytoplasmic arginyl-tRNA synthase. Binds tRNA. Possesses inflammatory cytokine activity. Negatively regulates TGF-beta signaling through stabilization of SMURF2 by binding to SMURF2 and inhibiting its SMAD7-mediated degradation. Involved in glucose homeostasis through induction of glucagon secretion at low glucose levels. Promotes dermal fibroblast proliferation and wound repair. Regulates KDELR1-mediated retention of HSP90B1/gp96 in the endoplasmic reticulum. Plays a role in angiogenesis by inducing endothelial cell migration at low concentrations and endothelian cell apoptosis at high concentrations. Induces maturation of dendritic cells and monocyte cell adhesion. The protein is Aminoacyl tRNA synthase complex-interacting multifunctional protein 1 (AIMP1) of Cricetulus griseus (Chinese hamster).